Consider the following 557-residue polypeptide: Probable protein kinase UbiB (557 aa).

The Protein kinase domain maps to 121–509; that stretch reads SFDTVPLASA…RKLQTRVVTA (389 aa). Residues 127-135 and K154 each bind ATP; that span reads LASASIAQV. The active-site Proton acceptor is D289. 2 helical membrane-spanning segments follow: residues 506–526 and 535–555; these read VVTA…YGLH and VPVW…VAWL.

It belongs to the ABC1 family. UbiB subfamily.

The protein resides in the cell inner membrane. Its pathway is cofactor biosynthesis; ubiquinone biosynthesis [regulation]. Is probably a protein kinase regulator of UbiI activity which is involved in aerobic coenzyme Q (ubiquinone) biosynthesis. In Xanthomonas axonopodis pv. citri (strain 306), this protein is Probable protein kinase UbiB.